Here is a 611-residue protein sequence, read N- to C-terminus: Putative clathrin assembly protein At4g02650 (611 aa).

The ENTH domain maps to 26–162; that stretch reads GRSSSLTELE…DYRMQGRRGK (137 aa). 2 disordered regions span residues 158–184 and 337–406; these read GRRG…HRGT and TTKS…GDLL. The span at 386–401 shows a compositional bias: basic and acidic residues; the sequence is METKKDVEEVVSRQDQ.

It is found in the membrane. The protein resides in the clathrin-coated pit. It localises to the golgi apparatus. Its subcellular location is the cytoplasmic vesicle. The protein localises to the clathrin-coated vesicle. This chain is Putative clathrin assembly protein At4g02650, found in Arabidopsis thaliana (Mouse-ear cress).